A 248-amino-acid chain; its full sequence is Segregation and condensation protein A (248 aa).

It belongs to the ScpA family. In terms of assembly, component of a cohesin-like complex composed of ScpA, ScpB and the Smc homodimer, in which ScpA and ScpB bind to the head domain of Smc. The presence of the three proteins is required for the association of the complex with DNA.

The protein localises to the cytoplasm. Functionally, participates in chromosomal partition during cell division. May act via the formation of a condensin-like complex containing Smc and ScpB that pull DNA away from mid-cell into both cell halves. This is Segregation and condensation protein A from Bacillus cytotoxicus (strain DSM 22905 / CIP 110041 / 391-98 / NVH 391-98).